The chain runs to 63 residues: MIFNSTGKEKFIFSEPTKLKVVQKEFKTENGYKCGIVLEETIEASLTLRLNNKRIVRLKNLEA.

This is an uncharacterized protein from Rickettsia conorii (strain ATCC VR-613 / Malish 7).